We begin with the raw amino-acid sequence, 184 residues long: ATP synthase subunit b, chloroplastic (184 aa).

The helical transmembrane segment at L27–L49 threads the bilayer.

This sequence belongs to the ATPase B chain family. As to quaternary structure, F-type ATPases have 2 components, F(1) - the catalytic core - and F(0) - the membrane proton channel. F(1) has five subunits: alpha(3), beta(3), gamma(1), delta(1), epsilon(1). F(0) has four main subunits: a(1), b(1), b'(1) and c(10-14). The alpha and beta chains form an alternating ring which encloses part of the gamma chain. F(1) is attached to F(0) by a central stalk formed by the gamma and epsilon chains, while a peripheral stalk is formed by the delta, b and b' chains.

It is found in the plastid. The protein resides in the chloroplast thylakoid membrane. Its function is as follows. F(1)F(0) ATP synthase produces ATP from ADP in the presence of a proton or sodium gradient. F-type ATPases consist of two structural domains, F(1) containing the extramembraneous catalytic core and F(0) containing the membrane proton channel, linked together by a central stalk and a peripheral stalk. During catalysis, ATP synthesis in the catalytic domain of F(1) is coupled via a rotary mechanism of the central stalk subunits to proton translocation. Component of the F(0) channel, it forms part of the peripheral stalk, linking F(1) to F(0). The sequence is that of ATP synthase subunit b, chloroplastic from Populus alba (White poplar).